The following is a 1788-amino-acid chain: U3 small nucleolar RNA-associated protein 10 (1788 aa).

Residues 585 to 622 (LDFQAVVPYAIVALSDPAKKVRRAAAELVTVLGSFYET) form an HEAT 1 repeat. The interval 884–905 (PATKRRRVGSSEKSVDSQSPAD) is disordered. HEAT repeat units follow at residues 926-962 (AKHP…LVLS), 1049-1086 (QTVK…AYEH), 1257-1294 (LSIA…SESI), 1301-1339 (EALL…KYGK), 1703-1740 (EHHK…RLGE), and 1744-1781 (QSLP…TLGE).

Belongs to the HEATR1/UTP10 family. Component of the ribosomal small subunit (SSU) processome.

It is found in the nucleus. The protein localises to the nucleolus. Involved in nucleolar processing of pre-18S ribosomal RNA. Involved in ribosome biosynthesis. The protein is U3 small nucleolar RNA-associated protein 10 (rbg-5) of Neurospora crassa (strain ATCC 24698 / 74-OR23-1A / CBS 708.71 / DSM 1257 / FGSC 987).